A 600-amino-acid chain; its full sequence is Proline--tRNA ligase (600 aa).

It belongs to the class-II aminoacyl-tRNA synthetase family. ProS type 1 subfamily. Homodimer.

Its subcellular location is the cytoplasm. The catalysed reaction is tRNA(Pro) + L-proline + ATP = L-prolyl-tRNA(Pro) + AMP + diphosphate. In terms of biological role, catalyzes the attachment of proline to tRNA(Pro) in a two-step reaction: proline is first activated by ATP to form Pro-AMP and then transferred to the acceptor end of tRNA(Pro). As ProRS can inadvertently accommodate and process non-cognate amino acids such as alanine and cysteine, to avoid such errors it has two additional distinct editing activities against alanine. One activity is designated as 'pretransfer' editing and involves the tRNA(Pro)-independent hydrolysis of activated Ala-AMP. The other activity is designated 'posttransfer' editing and involves deacylation of mischarged Ala-tRNA(Pro). The misacylated Cys-tRNA(Pro) is not edited by ProRS. The protein is Proline--tRNA ligase of Prochlorococcus marinus (strain MIT 9301).